A 564-amino-acid polypeptide reads, in one-letter code: CTP synthase (564 aa).

The amidoligase domain stretch occupies residues 1-265 (MTKFVFVTGG…DEIVCHRLGI (265 aa)). Residue S13 coordinates CTP. Residue S13 participates in UTP binding. ATP-binding positions include 14 to 19 (SLGKGI) and D71. D71 and E139 together coordinate Mg(2+). CTP is bound by residues 146 to 148 (DIE), 186 to 191 (KTKPTQ), and K222. Residues 186 to 191 (KTKPTQ) and K222 each bind UTP. A Glutamine amidotransferase type-1 domain is found at 290 to 543 (SIALVGKYVD…VRAAISFADK (254 aa)). Position 351 (G351) interacts with L-glutamine. Catalysis depends on C378, which acts as the Nucleophile; for glutamine hydrolysis. L-glutamine is bound by residues 379–382 (LGMQ), E402, and R469. Residues H516 and E518 contribute to the active site.

Belongs to the CTP synthase family. Homotetramer.

It catalyses the reaction UTP + L-glutamine + ATP + H2O = CTP + L-glutamate + ADP + phosphate + 2 H(+). It carries out the reaction L-glutamine + H2O = L-glutamate + NH4(+). The catalysed reaction is UTP + NH4(+) + ATP = CTP + ADP + phosphate + 2 H(+). The protein operates within pyrimidine metabolism; CTP biosynthesis via de novo pathway; CTP from UDP: step 2/2. Its activity is regulated as follows. Allosterically activated by GTP, when glutamine is the substrate; GTP has no effect on the reaction when ammonia is the substrate. The allosteric effector GTP functions by stabilizing the protein conformation that binds the tetrahedral intermediate(s) formed during glutamine hydrolysis. Inhibited by the product CTP, via allosteric rather than competitive inhibition. Functionally, catalyzes the ATP-dependent amination of UTP to CTP with either L-glutamine or ammonia as the source of nitrogen. Regulates intracellular CTP levels through interactions with the four ribonucleotide triphosphates. The chain is CTP synthase from Nitrosomonas eutropha (strain DSM 101675 / C91 / Nm57).